The following is a 105-amino-acid chain: Large ribosomal subunit protein bL21 (105 aa).

This sequence belongs to the bacterial ribosomal protein bL21 family. In terms of assembly, part of the 50S ribosomal subunit. Contacts protein L20.

Its function is as follows. This protein binds to 23S rRNA in the presence of protein L20. The sequence is that of Large ribosomal subunit protein bL21 from Methylobacterium nodulans (strain LMG 21967 / CNCM I-2342 / ORS 2060).